We begin with the raw amino-acid sequence, 337 residues long: Glucokinase (337 aa).

11-16 (ADIGGT) contacts ATP.

The protein belongs to the bacterial glucokinase family.

The protein localises to the cytoplasm. It carries out the reaction D-glucose + ATP = D-glucose 6-phosphate + ADP + H(+). The protein is Glucokinase of Xylella fastidiosa (strain 9a5c).